The primary structure comprises 197 residues: Peptide deformylase (197 aa).

Fe cation contacts are provided by cysteine 106 and histidine 148. Residue glutamate 149 is part of the active site. Fe cation is bound at residue histidine 152.

Belongs to the polypeptide deformylase family. It depends on Fe(2+) as a cofactor.

The catalysed reaction is N-terminal N-formyl-L-methionyl-[peptide] + H2O = N-terminal L-methionyl-[peptide] + formate. In terms of biological role, removes the formyl group from the N-terminal Met of newly synthesized proteins. Requires at least a dipeptide for an efficient rate of reaction. N-terminal L-methionine is a prerequisite for activity but the enzyme has broad specificity at other positions. The protein is Peptide deformylase of Mycobacterium bovis (strain ATCC BAA-935 / AF2122/97).